Reading from the N-terminus, the 189-residue chain is MDEFVNLKETELRLGLPGTDNVCEAKERVSCCNNNNKRVLSTDTEKEIESSSRKTETSPPRKAQIVGWPPVRSYRKNNIQSKKNESEHEGQGIYVKVSMDGAPYLRKIDLSCYKGYSELLKALEVMFKFSVGEYFERDGYKGSDFVPTYEDKDGDWMLIGDVPWEMFICTCKRLRIMKGSEAKGLGCGV.

Residues 12-16 (LRLGL) carry the EAR-like (transcriptional repression) motif. A disordered region spans residues 42 to 65 (TDTEKEIESSSRKTETSPPRKAQI). Over residues 43–56 (DTEKEIESSSRKTE) the composition is skewed to basic and acidic residues. In terms of domain architecture, PB1 spans 92 to 179 (GIYVKVSMDG…TCKRLRIMKG (88 aa)).

This sequence belongs to the Aux/IAA family. In terms of assembly, homodimers and heterodimers. Interacts with TPL. Interacts with TIR1, the F-box component of the Skp1-Cdc53/cullin-F-box (SCFTIR1) E3 ubiquitin ligase complex. Post-translationally, phosphorylated by phytochrome A in vitro. Highly expressed in stems and flowers. Expressed in hypocotyls, cotyledons and leaves, but barely detected in roots. Expressed in root tips. In the root meristem, specifically detected at the vascular tissue transition zone.

The protein localises to the nucleus. In terms of biological role, aux/IAA proteins are short-lived transcriptional factors that function as repressors of early auxin response genes at low auxin concentrations. Repression is thought to result from the interaction with auxin response factors (ARFs), proteins that bind to the auxin-responsive promoter element (AuxRE). Plays a central role in auxin regulation of root growth, in gravitropism, and in lateral root formation. Regulated by an auxin-induced protein turnover. Formation of heterodimers with ARF proteins may alter their ability to modulate early auxin response genes expression. When activated by cytokinin, restricts the expression of the PIN genes to the vascular transition zone. Induction of SHY2 in the vascular transition zone restricts BRX expression to down-regulate PIN3 and thus limit meristem growth, but proper SHY2 expression requires BRX. Involved in meristem growth and in determining its size. May participate in strigolactone signaling to regulate meristem size and lateral root formation. The sequence is that of Auxin-responsive protein IAA3 (IAA3) from Arabidopsis thaliana (Mouse-ear cress).